Consider the following 395-residue polypeptide: GPI-anchor transamidase (395 aa).

The first 27 residues, 1 to 27 (MAVTDSLSRAATVLATVLLLSFGSVAA), serve as a signal peptide directing secretion. The Lumenal portion of the chain corresponds to 28 to 368 (SHIEDQAEQF…PKLKDWHPPG (341 aa)). Residues Asp79, Ile82, Glu118, and Asp120 each contribute to the Ca(2+) site. Catalysis depends on His164, which acts as the Proton donor. Residue Cys206 is the Nucleophile; acyl-thioester intermediate of the active site. Residues Cys206, Ser232, and Ser234 each contribute to the a protein site. An autoinhibitory loop region spans residues 231-236 (DSLSHQ). Residues Cys275 and Cys280 are joined by a disulfide bond. The helical transmembrane segment at 369–385 (GFILGLWALIIMVFFKT) threads the bilayer. The Cytoplasmic segment spans residues 386–395 (YGIKHMKFIF).

Belongs to the peptidase C13 family. As to quaternary structure, heteropentamer. Part of the GPI-anchor transamidase complex, consisting of PIGK, PIGT, PIGS, PIGU and GAA1. Interacts with GPAA1. Interacts with PIGT; this interaction, via a disulfide link, stabilizes the expression of GAA1 and PIGK and links them to PIGS. In terms of processing, the disulfide bond between PIGK/GPI8 and PIGT is important for normal enzyme activity.

The protein localises to the endoplasmic reticulum membrane. The protein operates within glycolipid biosynthesis; glycosylphosphatidylinositol-anchor biosynthesis. In the absence of proproteins substrates, exists in an inactive state with a disrupted catalytic site by an autoinhibitory loop. The binding of proprotein substrates, particularly the CSP region, to GPI-T triggers concerted conformational changes that alleviate the inhibition by the autoinhibitory loop. Meanwhile, proprotein residues near the omega- site induce the formation of a catalytic cleft for catalysis, following which the products are released and GPI-T reverts to the inactive state. Its function is as follows. Catalytic subunit of the glycosylphosphatidylinositol-anchor (GPI-anchor) transamidase (GPI-T) complex that catalyzes the formation of the linkage between a proprotein and a GPI-anchor and participates in GPI anchored protein biosynthesis. Recognizes diverse proproteins at a C-terminal signal peptide (CSP) region that lacks consensus sequence and replaces it with a GPI-anchor via a transamidation reaction. Transamidation catalysis reaction follows a two-phase mechanism. In the acyl-enzyme phase, the carbonyl group of the proproteins's omega-site undergoes a nucleophilic attack forming an enzyme-substrate thioester bond. Followed by a general acid catalysis that allows CSP releasing, regenerating the carbonyl, and forming the acyl-enzyme intermediate. In the GPI-anchor attachment phase, the amino group of the GPI-anchor's ethanolamine phosphate, the one on third mannose (EtNP3), mediates a nucleophilic attack on the carbonyl of the acyl-enzyme intermediate, replacing the CSP, allowing GPI-anchor attachment to the omega-residue, therefore forming the product and freeing the enzyme. The chain is GPI-anchor transamidase from Homo sapiens (Human).